The sequence spans 172 residues: Signal peptidase complex catalytic subunit SEC11 (172 aa).

Over 1–14 (MLSSLGNPRQAATQ) the chain is Cytoplasmic. Residues 15–35 (LLNFALILSTAFMMWKGLSVA) form a helical; Signal-anchor for type II membrane protein membrane-spanning segment. At 36-172 (TDSPSPIVVV…MGLMVVLQRE (137 aa)) the chain is on the lumenal side. Active-site charge relay system residues include serine 49, histidine 90, and aspartate 115. Residues 158–169 (AMLGIMGLMVVL) form a C-terminal short (CTS) helix region.

This sequence belongs to the peptidase S26B family. As to quaternary structure, component of the signal peptidase complex (SPC) composed of a catalytic subunit SEC11 and three accessory subunits SPC1, SPC2 and SPC3. The complex induces a local thinning of the ER membrane which is used to measure the length of the signal peptide (SP) h-region of protein substrates. This ensures the selectivity of the complex towards h-regions shorter than 18-20 amino acids. SPC associates with the translocon complex.

It is found in the endoplasmic reticulum membrane. It carries out the reaction Cleavage of hydrophobic, N-terminal signal or leader sequences from secreted and periplasmic proteins.. In terms of biological role, catalytic component of the signal peptidase complex (SPC) which catalyzes the cleavage of N-terminal signal sequences from nascent proteins as they are translocated into the lumen of the endoplasmic reticulum. Specifically cleaves N-terminal signal peptides that contain a hydrophobic alpha-helix (h-region) shorter than 18-20 amino acids. This chain is Signal peptidase complex catalytic subunit SEC11 (SEC11), found in Pyricularia oryzae (strain 70-15 / ATCC MYA-4617 / FGSC 8958) (Rice blast fungus).